Reading from the N-terminus, the 731-residue chain is E3 ubiquitin-protein ligase SMURF1 (731 aa).

The 120-residue stretch at 1-120 (MSNPGTRRNG…TGYQRLDLCK (120 aa)) folds into the C2 domain. Serine 200 is subject to Phosphoserine. Residues 216–237 (EVRGPLQTPQNRPHGHQSPELP) are disordered. WW domains follow at residues 234-267 (PELPEGYEQRTTVQGQVYFLHTQTGVSTWHDPRI) and 280-313 (GPLPPGWEVRSTVSGRIYFVDHNNRTTQFTDPRL). Residues lysine 355 and lysine 357 each participate in a glycyl lysine isopeptide (Lys-Gly) (interchain with G-Cter in ubiquitin) cross-link. The region spanning 394 to 731 (RPKDLKKRLM…VEETCGFAVE (338 aa)) is the HECT domain. Cysteine 699 (glycyl thioester intermediate) is an active-site residue.

As to quaternary structure, interacts with TRAF4. Interacts (via HECT domain) with FBXL15 (via LRR repeats). Interacts with SMAD7 and TGFBR1; SMAD7 recruits SMURF1 to TGFBR1 and regulates TGF-beta receptor degradation. Interacts with MAVS; the interaction is mediated by NDFIP1. Post-translationally, auto-ubiquitinated in presence of NDFIP1. Ubiquitinated by the SCF(FBXL15) complex at Lys-355 and Lys-357, leading to its degradation by the proteasome. Lys-357 is the primary ubiquitination site.

The protein localises to the cytoplasm. Its subcellular location is the cell membrane. The catalysed reaction is S-ubiquitinyl-[E2 ubiquitin-conjugating enzyme]-L-cysteine + [acceptor protein]-L-lysine = [E2 ubiquitin-conjugating enzyme]-L-cysteine + N(6)-ubiquitinyl-[acceptor protein]-L-lysine.. The protein operates within protein modification; protein ubiquitination. In terms of biological role, E3 ubiquitin-protein ligase that acts as a negative regulator of BMP signaling pathway. Mediates ubiquitination and degradation of SMAD1 and SMAD5, 2 receptor-regulated SMADs specific for the BMP pathway. Promotes ubiquitination and subsequent proteasomal degradation of TRAF family members and RHOA. Promotes ubiquitination and subsequent proteasomal degradation of MAVS. Acts as an antagonist of TGF-beta signaling by ubiquitinating TGFBR1 and targeting it for degradation. Plays a role in dendrite formation by melanocytes. The protein is E3 ubiquitin-protein ligase SMURF1 (Smurf1) of Mus musculus (Mouse).